Reading from the N-terminus, the 843-residue chain is Translation initiation factor IF-2 (843 aa).

2 disordered regions span residues 55 to 185 (AEAV…EDRD) and 209 to 228 (KVEEEQKPKEPQKKNKQVKV). Residues 62-106 (PQEKPKKSAPKKEEKPKEEVKKEAEEKVAASKKEEEKPQEKKSVE) are compositionally biased toward basic and acidic residues. The span at 114 to 128 (LKKRRGLVIVKKKRP) shows a compositional bias: basic residues. Basic and acidic residues predominate over residues 129 to 141 (KVEPKVEEKEAKQ). Positions 156 to 165 (LKRKPKKAKK) are enriched in basic residues. 2 stretches are compositionally biased toward basic and acidic residues: residues 171–185 (KKNEGKKIEILEDRD) and 209–221 (KVEEEQKPKEPQK). The tr-type G domain occupies 342-511 (ERPPVITIMG…LLQAEIMELK (170 aa)). Residues 351 to 358 (GHVDHGKT) are G1. 351-358 (GHVDHGKT) contributes to the GTP binding site. The tract at residues 376–380 (GITQH) is G2. The segment at 397 to 400 (DTPG) is G3. Residues 397 to 401 (DTPGH) and 451 to 454 (NKID) each bind GTP. The interval 451-454 (NKID) is G4. A G5 region spans residues 487–489 (SAK).

Belongs to the TRAFAC class translation factor GTPase superfamily. Classic translation factor GTPase family. IF-2 subfamily.

Its subcellular location is the cytoplasm. Its function is as follows. One of the essential components for the initiation of protein synthesis. Protects formylmethionyl-tRNA from spontaneous hydrolysis and promotes its binding to the 30S ribosomal subunits. Also involved in the hydrolysis of GTP during the formation of the 70S ribosomal complex. In Nitratiruptor sp. (strain SB155-2), this protein is Translation initiation factor IF-2.